A 284-amino-acid polypeptide reads, in one-letter code: D-tagatose-1,6-bisphosphate aldolase subunit GatY (284 aa).

Asp-82 functions as the Proton donor in the catalytic mechanism. His-83 and His-180 together coordinate Zn(2+). Gly-181 serves as a coordination point for dihydroxyacetone phosphate. Residue His-208 coordinates Zn(2+). Dihydroxyacetone phosphate is bound by residues 209–211 and 230–233; these read GAS and NVAT.

The protein belongs to the class II fructose-bisphosphate aldolase family. TagBP aldolase GatY subfamily. Forms a complex with GatZ. Zn(2+) serves as cofactor.

The catalysed reaction is D-tagatofuranose 1,6-bisphosphate = D-glyceraldehyde 3-phosphate + dihydroxyacetone phosphate. The protein operates within carbohydrate metabolism; D-tagatose 6-phosphate degradation; D-glyceraldehyde 3-phosphate and glycerone phosphate from D-tagatose 6-phosphate: step 2/2. Catalytic subunit of the tagatose-1,6-bisphosphate aldolase GatYZ, which catalyzes the reversible aldol condensation of dihydroxyacetone phosphate (DHAP or glycerone-phosphate) with glyceraldehyde 3-phosphate (G3P) to produce tagatose 1,6-bisphosphate (TBP). Requires GatZ subunit for full activity and stability. Is involved in the catabolism of galactitol. The sequence is that of D-tagatose-1,6-bisphosphate aldolase subunit GatY from Salmonella enteritidis PT4 (strain P125109).